Consider the following 465-residue polypeptide: E3 ubiquitin-protein ligase parkin (465 aa).

Positions 1–76 (MIVFVRFNSS…VHIVQRPQRK (76 aa)) constitute a Ubiquitin-like domain. The residue at position 65 (Ser-65) is a Phosphoserine; by PINK1. Residues 71–96 (QRPQRKSHETNASGGDKPQSTPEGSI) are disordered. Positions 77 to 237 (SHETNASGGD…LITNNSRSIP (161 aa)) are necessary for PINK1-dependent localization to mitochondria. Thr-80 carries the post-translational modification Phosphothreonine. Residues 80-93 (TNASGGDKPQSTPE) are compositionally biased toward polar residues. The RING-type 0; atypical zinc-finger motif lies at 141 to 225 (PTYHSFFVYC…PTSDKDTSVA (85 aa)). Thr-175 is subject to Phosphothreonine; by PINK1. Residues 204–238 (TRAEFFFKCGAHPTSDKDTSVALNLITNNSRSIPC) are SYT11 binding 1. At Thr-217 the chain carries Phosphothreonine. Residues 234 to 465 (RSIPCIACTD…ACMGDHWFDV (232 aa)) are TRIAD supradomain. The Zn(2+) site is built by Cys-238, Cys-241, Cys-253, His-257, Cys-260, Cys-263, Cys-289, Cys-293, Cys-332, and Cys-337. Residues 238–293 (CIACTDVRNPVLVFQCNHRHVICLDCFHLYCVTRLNDRQFVHDAQLGYSLPCVAGC) form an RING-type 1 zinc finger. An SYT11 binding 2 region spans residues 257–293 (HVICLDCFHLYCVTRLNDRQFVHDAQLGYSLPCVAGC). Residues 313–377 (NRYQQYGAEE…CKEAYHEGEC (65 aa)) form an IBR-type zinc finger. Lys-349 participates in a covalent cross-link: Glycyl lysine isopeptide (Lys-Gly) (interchain with G-Cter in ISG15). 4 residues coordinate Zn(2+): Cys-352, Cys-360, Cys-365, and Cys-368. Residue Lys-369 forms a Glycyl lysine isopeptide (Lys-Gly) (interchain with G-Cter in ISG15) linkage. 2 residues coordinate Zn(2+): His-373 and Cys-377. Residues 378-410 (DSMFEASGATSQAYRVDQRAAEQARWEEASKET) are REP. Cys-418 and Cys-421 together coordinate Zn(2+). Residues 418-449 (CPRCNVPIEKNGGCMHMKCPQPQCKLEWCWNC) form an RING-type 2; atypical zinc finger. Residue Cys-431 is part of the active site. The Zn(2+) site is built by Cys-436, Cys-441, Cys-446, Cys-449, Cys-457, and His-461.

It belongs to the RBR family. Parkin subfamily. Forms an E3 ubiquitin ligase complex with UBE2L3 or UBE2L6. Mediates 'Lys-63'-linked polyubiquitination by associating with UBE2V1. Part of a SCF-like complex, consisting of PRKN, CUL1 and FBXW7. Interacts with SNCAIP. Binds to the C2A and C2B domains of SYT11. Interacts and regulates the turnover of SEPTIN5. Part of a complex, including STUB1, HSP70 and GPR37. The amount of STUB1 in the complex increases during ER stress. STUB1 promotes the dissociation of HSP70 from PRKN and GPR37, thus facilitating PRKN-mediated GPR37 ubiquitination. HSP70 transiently associates with unfolded GPR37 and inhibits the E3 activity of PRKN, whereas, STUB1 enhances the E3 activity of PRKN through promotion of dissociation of HSP70 from PRKN-GPR37 complexes. Interacts with PSMD4 and PACRG. Interacts with LRRK2. Interacts with RANBP2. Interacts with SUMO1 but not SUMO2, which promotes nuclear localization and autoubiquitination. Interacts (via first RING-type domain) with AIMP2 (via N-terminus). Interacts with PSMA7 and RNF41. Interacts with PINK1. Forms a complex with PINK1 and PARK7. Interacts with CHPF, the interaction with isoform 2 may facilitate PRKN transport into the mitochondria. Interacts with MFN2 (phosphorylated), promotes PRKN localization in dysfunctional depolarized mitochondria. Interacts with FBXO7; this promotes translocation to dysfunctional depolarized mitochondria. Interacts with ZNF746. Interacts with heat shock protein 70 family members, including HSPA1L, HSPA1A and HSPA8; interaction HSPA1L promotes translocation to damaged mitochondria. Interacts with BAG4 and, to a lesser extent, BAG5; interaction with BAG4 inhibits translocation to damaged mitochondria. Forms a complex with PRKN and PARK7. Interacts with AMBRA1. Post-translationally, auto-ubiquitinates in an E2-dependent manner leading to its own degradation. Also polyubiquitinated by RNF41 for proteasomal degradation. In terms of processing, S-nitrosylated. Phosphorylated. Activation requires phosphorylation at Ser-65 by PINK1 and binding to PINK1 phosphorylated ubiquitin. Phosphorylation at Thr-175 by PINK1 and at Thr-217 is important for mitochondrial localization. As to expression, largely confined to neuronal elements, including fibers and neuropil. Highly expressed at the forebrain level, in pyramidal cells of layer V, in various cortical regions and cerebellum. Expressed in the nucleus of diagonal band of Broca, nucleus basalis, bed nucleus of the stria terminalis, and olfactory tubercle. Moderate expression is seen in most neurons of the subthalamic nucleus, heart, skeletal muscle and testis. Moderate expression was found in frontal cortex, parietal cortex, cerebellum, heart, skeletal muscle and testis.

Its subcellular location is the cytoplasm. The protein localises to the cytosol. It localises to the nucleus. The protein resides in the endoplasmic reticulum. It is found in the mitochondrion. Its subcellular location is the mitochondrion outer membrane. The protein localises to the cell projection. It localises to the neuron projection. The protein resides in the postsynaptic density. It is found in the presynapse. The enzyme catalyses [E2 ubiquitin-conjugating enzyme]-S-ubiquitinyl-L-cysteine + [acceptor protein]-L-lysine = [E2 ubiquitin-conjugating enzyme]-L-cysteine + [acceptor protein]-N(6)-ubiquitinyl-L-lysine.. Its pathway is protein modification; protein ubiquitination. Its activity is regulated as follows. In the autoinhibited state the side chain of Phe-463 inserts into a hydrophobic groove in RING-0, occluding the ubiquitin acceptor site Cys-431, whereas the REP repressor element binds RING-1 and blocks its E2-binding site. Activation of PRKN requires 2 steps: (1) phosphorylation at Ser-65 by PINK1 and (2) binding to phosphorylated ubiquitin, leading to unlock repression of the catalytic Cys-431 by the RING-0 region via an allosteric mechanism and converting PRKN to its fully-active form. According to another report, phosphorylation at Ser-65 by PINK1 is not essential for activation and only binding to phosphorylated ubiquitin is essential to unlock repression. In addition, ISG15 conjugation positively regulates its ubiquitin E3 ligase activity by suppressing the intramolecular interaction that maintains its autoinhibited conformation. Functions within a multiprotein E3 ubiquitin ligase complex, catalyzing the covalent attachment of ubiquitin moieties onto substrate proteins. Substrates include SYT11 and VDAC1. Other substrates are BCL2, CCNE1, GPR37, RHOT1/MIRO1, MFN1, MFN2, STUB1, SNCAIP, SEPTIN5, TOMM20, USP30, ZNF746, MIRO1 and AIMP2. Mediates monoubiquitination as well as 'Lys-6', 'Lys-11', 'Lys-48'-linked and 'Lys-63'-linked polyubiquitination of substrates depending on the context. Participates in the removal and/or detoxification of abnormally folded or damaged protein by mediating 'Lys-63'-linked polyubiquitination of misfolded proteins such as PARK7: 'Lys-63'-linked polyubiquitinated misfolded proteins are then recognized by HDAC6, leading to their recruitment to aggresomes, followed by degradation. Mediates 'Lys-63'-linked polyubiquitination of a 22 kDa O-linked glycosylated isoform of SNCAIP, possibly playing a role in Lewy-body formation. Mediates monoubiquitination of BCL2, thereby acting as a positive regulator of autophagy. Protects against mitochondrial dysfunction during cellular stress, by acting downstream of PINK1 to coordinate mitochondrial quality control mechanisms that remove and replace dysfunctional mitochondrial components. Depending on the severity of mitochondrial damage and/or dysfunction, activity ranges from preventing apoptosis and stimulating mitochondrial biogenesis to regulating mitochondrial dynamics and eliminating severely damaged mitochondria via mitophagy. Activation and recruitment onto the outer membrane of damaged/dysfunctional mitochondria (OMM) requires PINK1-mediated phosphorylation of both PRKN and ubiquitin. After mitochondrial damage, functions with PINK1 to mediate the decision between mitophagy or preventing apoptosis by inducing either the poly- or monoubiquitination of VDAC1, respectively; polyubiquitination of VDAC1 promotes mitophagy, while monoubiquitination of VDAC1 decreases mitochondrial calcium influx which ultimately inhibits apoptosis. When cellular stress results in irreversible mitochondrial damage, promotes the autophagic degradation of dysfunctional depolarized mitochondria (mitophagy) by promoting the ubiquitination of mitochondrial proteins such as TOMM20, RHOT1/MIRO1, MFN1 and USP30. Preferentially assembles 'Lys-6'-, 'Lys-11'- and 'Lys-63'-linked polyubiquitin chains, leading to mitophagy. The PINK1-PRKN pathway also promotes fission of damaged mitochondria by PINK1-mediated phosphorylation which promotes the PRKN-dependent degradation of mitochondrial proteins involved in fission such as MFN2. This prevents the refusion of unhealthy mitochondria with the mitochondrial network or initiates mitochondrial fragmentation facilitating their later engulfment by autophagosomes. Regulates motility of damaged mitochondria via the ubiquitination and subsequent degradation of MIRO1 and MIRO2; in motor neurons, this likely inhibits mitochondrial intracellular anterograde transport along the axons which probably increases the chance of the mitochondria undergoing mitophagy in the soma. Involved in mitochondrial biogenesis via the 'Lys-48'-linked polyubiquitination of transcriptional repressor ZNF746/PARIS which leads to its subsequent proteasomal degradation and allows activation of the transcription factor PPARGC1A. Limits the production of reactive oxygen species (ROS). Regulates cyclin-E during neuronal apoptosis. In collaboration with CHPF isoform 2, may enhance cell viability and protect cells from oxidative stress. Independently of its ubiquitin ligase activity, protects from apoptosis by the transcriptional repression of p53/TP53. May protect neurons against alpha synuclein toxicity, proteasomal dysfunction, GPR37 accumulation, and kainate-induced excitotoxicity. May play a role in controlling neurotransmitter trafficking at the presynaptic terminal and in calcium-dependent exocytosis. May represent a tumor suppressor gene. In Rattus norvegicus (Rat), this protein is E3 ubiquitin-protein ligase parkin.